The chain runs to 370 residues: Histidinol-phosphate aminotransferase 3 (370 aa).

Lysine 233 is modified (N6-(pyridoxal phosphate)lysine).

The protein belongs to the class-II pyridoxal-phosphate-dependent aminotransferase family. Histidinol-phosphate aminotransferase subfamily. As to quaternary structure, homodimer. Requires pyridoxal 5'-phosphate as cofactor.

The catalysed reaction is L-histidinol phosphate + 2-oxoglutarate = 3-(imidazol-4-yl)-2-oxopropyl phosphate + L-glutamate. Its pathway is amino-acid biosynthesis; L-histidine biosynthesis; L-histidine from 5-phospho-alpha-D-ribose 1-diphosphate: step 7/9. The chain is Histidinol-phosphate aminotransferase 3 from Burkholderia lata (strain ATCC 17760 / DSM 23089 / LMG 22485 / NCIMB 9086 / R18194 / 383).